Reading from the N-terminus, the 62-residue chain is Alkaline proteinase (62 aa).

Residues 1–62 form the Peptidase S8 domain; that stretch reads GSTSYIYDTS…FAPGTSVLSS (62 aa). Asp21 functions as the Charge relay system in the catalytic mechanism.

It localises to the secreted. Inhibited by phenylmethanesulfonyl fluoride (PMSF) and chymostatin (CST), but not by Bowman-Birk type trypsin-chymotrypsin inhibitor (BBI). Serine protease. May be involved in the invasion of grains and hydrolysis of grain proteins. This is Alkaline proteinase from Fusarium culmorum.